Here is a 138-residue protein sequence, read N- to C-terminus: uncharacterized protein (138 aa).

3 helical membrane passes run 17 to 37 (IVVSVFYLILFFLILNITIYF), 43 to 63 (FTVVVKNSVLTSFFVNLLLVC), and 117 to 137 (FWWMNLIVYLVGSLVSGLVSL).

Its subcellular location is the cell membrane. This is an uncharacterized protein from Mycoplasma genitalium (strain ATCC 33530 / DSM 19775 / NCTC 10195 / G37) (Mycoplasmoides genitalium).